The following is a 340-amino-acid chain: uncharacterized protein (340 aa).

This is an uncharacterized protein from Acanthamoeba polyphaga mimivirus (APMV).